The primary structure comprises 316 residues: MARRRKGRPVNGVILIDKPTGITSNDTLQKVKRIYFAEKAGHTGALDPLATGMLPICLGEATKFSQFLLDSDKRYRVVAKLGERTNTSDSDGEVVQTREVKVDRGQLERCIAKFRGTTDQIPSMFSALKYQGRPLYEYAREGIEVPRESRKITVYSIELLRFEGHEVEMEVHCSKGTYIRTITDDLGEMLGCGAHVTYLRRTGVSNYPYENMVTIEDLEALLEQAHREERAPRELLDPLLMPMDSAVQDLPEVNMIPELADHVLHGQPVQVFGAPQDGIVRMTSGDERLFIGVGHIDDDGRVAPKRLVVFRDEEEK.

The active-site Nucleophile is the D47.

It belongs to the pseudouridine synthase TruB family. Type 1 subfamily.

It catalyses the reaction uridine(55) in tRNA = pseudouridine(55) in tRNA. Functionally, responsible for synthesis of pseudouridine from uracil-55 in the psi GC loop of transfer RNAs. The polypeptide is tRNA pseudouridine synthase B (Aliivibrio fischeri (strain MJ11) (Vibrio fischeri)).